Consider the following 309-residue polypeptide: Probable nitrogen assimilation transcriptional activator (309 aa).

One can recognise an HTH lysR-type domain in the interval 1-57; sequence MRLEQLQAALRVAETGSFQEAAQKVGCNQSTISRQVKGLEDELGIALFRRQGRMKLT. The segment at residues 18 to 37 is a DNA-binding region (H-T-H motif); sequence FQEAAQKVGCNQSTISRQVK.

It belongs to the LysR transcriptional regulatory family.

Seems to regulate utilization of fixed nitrogen by controlling the expression of a certain gene(s) involved in nitrogen metabolism. The sequence is that of Probable nitrogen assimilation transcriptional activator (ntcB) from Synechococcus elongatus (strain ATCC 33912 / PCC 7942 / FACHB-805) (Anacystis nidulans R2).